The chain runs to 548 residues: Fumarate hydratase class I, anaerobic (548 aa).

A [4Fe-4S] cluster-binding site is contributed by cysteine 105. Lysine 192 carries the N6-acetyllysine modification. [4Fe-4S] cluster is bound by residues cysteine 224 and cysteine 318.

The protein belongs to the class-I fumarase family. In terms of assembly, homodimer. The cofactor is [4Fe-4S] cluster.

It catalyses the reaction (S)-malate = fumarate + H2O. The enzyme catalyses (S,S)-tartrate = oxaloacetate + H2O. In terms of biological role, catalyzes the reversible hydration of fumarate to (S)-malate. Functions in the generation of fumarate for use as an anaerobic electron acceptor. To a lesser extent, also displays D-tartrate dehydratase activity, but is not able to convert (R)-malate, L-tartrate or meso-tartrate. Is required for anaerobic growth on D-tartrate. The sequence is that of Fumarate hydratase class I, anaerobic from Escherichia coli (strain K12).